The following is a 242-amino-acid chain: UPF0157 protein PA4798 (242 aa).

Positions 215-242 are disordered; it reads AGAESTPGGPADTAYFESLRSRVSKPQD.

The protein belongs to the UPF0157 (GrpB) family.

The protein is UPF0157 protein PA4798 of Pseudomonas aeruginosa (strain ATCC 15692 / DSM 22644 / CIP 104116 / JCM 14847 / LMG 12228 / 1C / PRS 101 / PAO1).